We begin with the raw amino-acid sequence, 540 residues long: Sesquiterpene synthase 15b (540 aa).

Residues D292, D296, and E445 each contribute to the Mg(2+) site. The DDXXD motif motif lies at 292-296 (DDIYD).

It belongs to the terpene synthase family. Tpsa subfamily. Mg(2+) serves as cofactor. Mn(2+) is required as a cofactor.

It catalyses the reaction (2E,6E)-farnesyl diphosphate = germacrene A + diphosphate. It participates in secondary metabolite biosynthesis; terpenoid biosynthesis. Functionally, sesquiterpene synthase involved in the biosynthesis of volatile compounds. Mediates the conversion of (2E,6E)-farnesyl diphosphate (FPP) into germacrene A. The sequence is that of Sesquiterpene synthase 15b from Solanum habrochaites (Wild tomato).